The chain runs to 224 residues: MEIEVVYQHSDFIIINKSEGISVHKDQEEQGLTELVAKQLNVPKVWLVHRLDKVTSGLLILALNAESAAEFSRLFSEHKIHKTYLALSNQKPKKKQGLIIGDMKKAREGAWKLCQTKDNPAITRFESVSCEPNLRLFILKPQTGKTHQLRVAMKSLGSPILGDGLYGKNTEKIDRTYLHATQLEFDYLNNFISVTCLPSQGQFWIKPTVFEQIQVYLTKPFLSK.

Residue aspartate 52 is part of the active site.

It belongs to the pseudouridine synthase RluA family.

The enzyme catalyses a uridine in RNA = a pseudouridine in RNA. This is an uncharacterized protein from Haemophilus influenzae (strain ATCC 51907 / DSM 11121 / KW20 / Rd).